The chain runs to 552 residues: Berberine bridge enzyme-like 6 (552 aa).

Residues 1–16 (MKEAFVFLLCLTNKFP) form the signal peptide. A disulfide bridge links cysteine 56 with cysteine 119. Asparagine 76, asparagine 161, asparagine 280, asparagine 364, asparagine 419, and asparagine 463 each carry an N-linked (GlcNAc...) asparagine glycan. Positions 93-270 (FSSPNFKKLL…LSWKINLVEV (178 aa)) constitute an FAD-binding PCMH-type domain. The segment at residues 134 to 196 (HDNEGFSYMS…QTLAFPAGVC (63 aa)) is a cross-link (6-(S-cysteinyl)-8alpha-(pros-histidyl)-FAD (His-Cys)).

The protein belongs to the oxygen-dependent FAD-linked oxidoreductase family. FAD serves as cofactor. Post-translationally, the FAD cofactor is bound via a bicovalent 6-S-cysteinyl, 8alpha-N1-histidyl FAD linkage.

The protein resides in the secreted. Its subcellular location is the cell wall. In terms of biological role, probable flavin-dependent oxidoreductase. This chain is Berberine bridge enzyme-like 6, found in Arabidopsis thaliana (Mouse-ear cress).